The following is a 346-amino-acid chain: tRNA-specific 2-thiouridylase MnmA (346 aa).

Position 6 to 13 (6 to 13) interacts with ATP; sequence AMSGGTDS. Residue Cys90 is the Nucleophile of the active site. Cys90 and Cys187 are joined by a disulfide. Gly114 is an ATP binding site. An interaction with tRNA region spans residues 137–139; sequence KDQ. Cys187 serves as the catalytic Cysteine persulfide intermediate. An interaction with tRNA region spans residues 292–293; sequence RY.

Belongs to the MnmA/TRMU family.

It is found in the cytoplasm. The catalysed reaction is S-sulfanyl-L-cysteinyl-[protein] + uridine(34) in tRNA + AH2 + ATP = 2-thiouridine(34) in tRNA + L-cysteinyl-[protein] + A + AMP + diphosphate + H(+). Functionally, catalyzes the 2-thiolation of uridine at the wobble position (U34) of tRNA, leading to the formation of s(2)U34. The polypeptide is tRNA-specific 2-thiouridylase MnmA (Nitratidesulfovibrio vulgaris (strain ATCC 29579 / DSM 644 / CCUG 34227 / NCIMB 8303 / VKM B-1760 / Hildenborough) (Desulfovibrio vulgaris)).